Consider the following 96-residue polypeptide: Copper-sensing transcriptional repressor RicR (96 aa).

The residue at position 2 (Thr-2) is an N-acetylthreonine. The Cu cation site is built by Cys-38, His-63, and Cys-67.

The protein belongs to the CsoR family.

The protein localises to the cytoplasm. Its function is as follows. Under low copper conditions, represses the expression of lpqS, Rv2963, mymT, socA, socB, mmcO and its own expression. In the presence of copper, RicR dissociates from DNA, leading to the expression of the target genes. Members of the RicR regulon are important for copper resistance during infections and full virulence in a mouse model of infection. This chain is Copper-sensing transcriptional repressor RicR, found in Mycobacterium tuberculosis (strain ATCC 25618 / H37Rv).